We begin with the raw amino-acid sequence, 201 residues long: Recombination protein RecR (201 aa).

The segment at 59–74 (CEICGNMDTENICCIC) adopts a C4-type zinc-finger fold. The Toprim domain maps to 82–177 (SVIAVVETVA…KISRLASGIP (96 aa)).

Belongs to the RecR family.

Functionally, may play a role in DNA repair. It seems to be involved in an RecBC-independent recombinational process of DNA repair. It may act with RecF and RecO. The sequence is that of Recombination protein RecR from Rickettsia felis (strain ATCC VR-1525 / URRWXCal2) (Rickettsia azadi).